The chain runs to 812 residues: MRYIKFFKELNNKNVNLVGGKNASIGEMFQELVPIGIKVPDGFAITSEAYWYLLEQGGAKQKIIELLENVDATEIDVLKIRSKQIRELIFGTPFPSDLRDEIFQAYEILSQQYHMKEADVAVRSSATAEDLPDASFAGQQDTYLNIKGKTELIHYIKSCLASLFTDRAISYRASRGFDHLKVALSVGVQKMVRADKGSAGVMFSIDTETGFKDAVFITSAWGLGENVVGGTINPDEFYVFKPTLEQNKRPIIKRQLGNKTQKMVYAPRGSEHPTRNIKTTKKEWQSFSLSDEDVLILAKYAIEIEKHYSKEAKQYRPMDIEWAKDGESGEIFIVQARPETVQSQKSKEESQVFEKFKFKNPNEKKEIILQGRAIGSKIGSGKVRIINDLEHMNSFKEGEILVTDNTDPDWEPCMKKASAVITNRGGRTCHAAIVAREIGVPAIVGVSGATDSLYTGMEITVSCAEGEEGYVYAGIYEHEIERVELSNMQETQTKIYINIGNPEKAFGFSQLPNHGVGLARMEMIILNQIKAHPLALVDLHHKKSVKEKNEIENLMAGYANPKDFFVKKIAEGIGMISAAFYPKPVIVRTSDFKSNEYMRMLGGSSYEPNEENPMLGYRGASRYYSESYNEAFSWECEALALVREEMGLTNMKVMIPFLRTIEEGKKVLEILRKNNLESGKNGLEIYIMCELPVNVILADDFLSLFDGFSIGSNDLTQLTLGVDRDSELVSHVFDERNEAMLKMFKKAIEACKRHNKYCGICGQAPSDYPEVTEFLVKEGITSISLNPDSVIPTWNAVAKLEKELKEHGLTEH.

His430 acts as the Tele-phosphohistidine intermediate in catalysis. Substrate is bound by residues Arg520, Arg588, Glu690, Gly711, Ser712, Asn713, and Asp714. Residue Glu690 participates in Mg(2+) binding. Position 714 (Asp714) interacts with Mg(2+). The active-site Proton donor is the Cys761.

Belongs to the PEP-utilizing enzyme family. Mg(2+) is required as a cofactor.

It carries out the reaction pyruvate + ATP + H2O = phosphoenolpyruvate + AMP + phosphate + 2 H(+). It functions in the pathway carbohydrate biosynthesis; gluconeogenesis. Functionally, catalyzes the phosphorylation of pyruvate to phosphoenolpyruvate. This is Phosphoenolpyruvate synthase (ppsA) from Helicobacter pylori (strain ATCC 700392 / 26695) (Campylobacter pylori).